A 468-amino-acid polypeptide reads, in one-letter code: Argininosuccinate lyase (468 aa).

2-(N(omega)-L-arginino)succinate-binding residues include Ser33, Asn121, and Thr166. His167 acts as the Proton acceptor in catalysis. Ser288 acts as the Proton donor in catalysis. 2-(N(omega)-L-arginino)succinate contacts are provided by Asn296, Tyr328, Gln333, and Lys336.

This sequence belongs to the lyase 1 family. Argininosuccinate lyase subfamily. In terms of assembly, homotetramer.

It catalyses the reaction 2-(N(omega)-L-arginino)succinate = fumarate + L-arginine. Its pathway is amino-acid biosynthesis; L-arginine biosynthesis; L-arginine from L-ornithine and carbamoyl phosphate: step 3/3. The chain is Argininosuccinate lyase (ARG4) from Candida albicans (Yeast).